A 250-amino-acid chain; its full sequence is 5-oxoprolinase subunit A (250 aa).

It belongs to the LamB/PxpA family. Forms a complex composed of PxpA, PxpB and PxpC.

The enzyme catalyses 5-oxo-L-proline + ATP + 2 H2O = L-glutamate + ADP + phosphate + H(+). Its function is as follows. Catalyzes the cleavage of 5-oxoproline to form L-glutamate coupled to the hydrolysis of ATP to ADP and inorganic phosphate. The protein is 5-oxoprolinase subunit A of Staphylococcus aureus (strain MRSA252).